Consider the following 564-residue polypeptide: Proline--tRNA ligase (564 aa).

The protein belongs to the class-II aminoacyl-tRNA synthetase family. ProS type 1 subfamily. In terms of assembly, homodimer.

The protein localises to the cytoplasm. It carries out the reaction tRNA(Pro) + L-proline + ATP = L-prolyl-tRNA(Pro) + AMP + diphosphate. Functionally, catalyzes the attachment of proline to tRNA(Pro) in a two-step reaction: proline is first activated by ATP to form Pro-AMP and then transferred to the acceptor end of tRNA(Pro). As ProRS can inadvertently accommodate and process non-cognate amino acids such as alanine and cysteine, to avoid such errors it has two additional distinct editing activities against alanine. One activity is designated as 'pretransfer' editing and involves the tRNA(Pro)-independent hydrolysis of activated Ala-AMP. The other activity is designated 'posttransfer' editing and involves deacylation of mischarged Ala-tRNA(Pro). The misacylated Cys-tRNA(Pro) is not edited by ProRS. In Sulfurihydrogenibium sp. (strain YO3AOP1), this protein is Proline--tRNA ligase.